We begin with the raw amino-acid sequence, 555 residues long: Acetyl-coenzyme A thioesterase (555 aa).

The region spanning 5–117 (APGEVVMSQA…FSTFVAKPVG (113 aa)) is the HotDog ACOT-type 1 domain. K33 carries the post-translational modification N6-succinyllysine. CoA is bound by residues 53–55 (TAS), 82–84 (STS), and R144. An N6-succinyllysine mark is found at K159 and K228. A HotDog ACOT-type 2 domain is found at 179-294 (RGTSVQSIEL…FLIYNAADDK (116 aa)). 234–236 (KFR) contacts CoA. The region spanning 340 to 549 (CIHWDISKQA…IQFLENPPDD (210 aa)) is the START domain.

In terms of assembly, homodimer or homotetramer.

It is found in the cytoplasm. The protein resides in the cytosol. It catalyses the reaction acetyl-CoA + H2O = acetate + CoA + H(+). The enzyme catalyses butanoyl-CoA + H2O = butanoate + CoA + H(+). It carries out the reaction hexanoyl-CoA + H2O = hexanoate + CoA + H(+). The protein operates within lipid metabolism; fatty acid metabolism. Its activity is regulated as follows. Inhibited by ADP. Active in the presence of ATP. Cold labile, it dissociates into inactive monomers at low temperature. Functionally, catalyzes the hydrolysis of acyl-CoAs into free fatty acids and coenzyme A (CoASH), regulating their respective intracellular levels. Preferentially hydrolyzes acetyl-CoA. The sequence is that of Acetyl-coenzyme A thioesterase (ACOT12) from Homo sapiens (Human).